The following is a 175-amino-acid chain: Development-specific protein S homolog (175 aa).

Beta/gamma crystallin 'Greek key' domains lie at 2–46 and 48–86; these read ANIT…KVPP and VKAI…KVMS. Positions 87-90 are connecting peptide; the sequence is VPVQ. 2 Beta/gamma crystallin 'Greek key' domains span residues 91–135 and 136–175; these read PRAR…KPEG and LKVV…RITP.

The protein belongs to the beta/gamma-crystallin family.

The protein localises to the spore. It is found in the perispore. The protein is Development-specific protein S homolog (ops) of Myxococcus xanthus.